The primary structure comprises 345 residues: N-acetyl-gamma-glutamyl-phosphate reductase (345 aa).

Residue Cys-149 is part of the active site.

It belongs to the NAGSA dehydrogenase family. Type 1 subfamily.

The protein localises to the cytoplasm. The catalysed reaction is N-acetyl-L-glutamate 5-semialdehyde + phosphate + NADP(+) = N-acetyl-L-glutamyl 5-phosphate + NADPH + H(+). It functions in the pathway amino-acid biosynthesis; L-arginine biosynthesis; N(2)-acetyl-L-ornithine from L-glutamate: step 3/4. In terms of biological role, catalyzes the NADPH-dependent reduction of N-acetyl-5-glutamyl phosphate to yield N-acetyl-L-glutamate 5-semialdehyde. In Bacillus subtilis (strain 168), this protein is N-acetyl-gamma-glutamyl-phosphate reductase.